The following is a 238-amino-acid chain: Ribonuclease PH (238 aa).

Phosphate contacts are provided by residues Arg86 and 124–126 (GTR).

The protein belongs to the RNase PH family. Homohexameric ring arranged as a trimer of dimers.

The enzyme catalyses tRNA(n+1) + phosphate = tRNA(n) + a ribonucleoside 5'-diphosphate. Phosphorolytic 3'-5' exoribonuclease that plays an important role in tRNA 3'-end maturation. Removes nucleotide residues following the 3'-CCA terminus of tRNAs; can also add nucleotides to the ends of RNA molecules by using nucleoside diphosphates as substrates, but this may not be physiologically important. Probably plays a role in initiation of 16S rRNA degradation (leading to ribosome degradation) during starvation. The sequence is that of Ribonuclease PH from Klebsiella pneumoniae (strain 342).